A 120-amino-acid polypeptide reads, in one-letter code: Non-specific lipid-transfer protein 1 (120 aa).

Positions 1–25 (MARSMKLACVALVICMVVIAPMAEA) are cleaved as a signal peptide. 4 cysteine pairs are disulfide-bonded: Cys-29–Cys-78, Cys-39–Cys-55, Cys-56–Cys-101, and Cys-76–Cys-115. A propeptide is located at residue Phe-120.

This sequence belongs to the plant LTP family. In terms of tissue distribution, expressed in roots, stem, leaves and tendrils of the mature plant.

Its function is as follows. Plant non-specific lipid-transfer proteins transfer phospholipids as well as galactolipids across membranes. May play a role in wax or cutin deposition in the cell walls of expanding epidermal cells and certain secretory tissues. Binds saturated and unsaturated lipids, jasmonic acid and lysolipids. Has antifungal activity against A.niger VKM F-2259 (IC(50)=40 uM), F.oxysporum TCXA-4 (IC(50)=20-40), F.solani VKM F-142 (IC(50)=20-40 uM) and N.crassa VKM F-184 (IC(50)=40 uM). Has weak antibacterial activity against A.tumefaciens A281, C.michiganensis VKM Ac-1144 and P.syringae VKM B-1546. The chain is Non-specific lipid-transfer protein 1 from Pisum sativum (Garden pea).